Here is a 151-residue protein sequence, read N- to C-terminus: Large ribosomal subunit protein bL9 (151 aa).

Belongs to the bacterial ribosomal protein bL9 family.

Functionally, binds to the 23S rRNA. This is Large ribosomal subunit protein bL9 from Lactobacillus helveticus (strain DPC 4571).